Reading from the N-terminus, the 516-residue chain is MADKLIIFDTTLRDGEQSPGASMTKEEKIRIAKQLERMKVDVIEAGFAASSNGDFDAIHTIAGMIKDSTICSLARANDKDIQRAADALKPADHFRIHTFIATSPLHMEKKLRMSPEQVLEQAKLAVRFARKFTNDVEFSPEDGSRSDMDFLCRVLEAVIAEGATTINIADTVGYGVPELYGNLVKTLRERIPNSDKAVFSVHCHNDLGMAVANSLAGVKIGGARQVECTINGLGERAGNTSLEEIVMAVRTRKDYFGLDLGIDTTQIVPASKLVSQITGFVVQPNKAVVGANAFAHASGIHQDGVLKARDTYEIMRAEDVGWTANKIVLGKLSGRNAFKQRLQELGISLDSESELNLAFQRFKELADRKAEIFDEDIIAIVTEESAEAQEKEHYKFVSLSQHSETGERPHARIVFSVEGKEVVGEANGNGPVDATLNAIETEVGSGSELLLYSVNAITTGTQAQGEVTVRLSKAGRIVNGVGTDPDIVAASAKAYISALNRLYAGADKLNPQRADI.

The Pyruvate carboxyltransferase domain occupies L5–V268. The Mn(2+) site is built by D14, H202, H204, and N239. The regulatory domain stretch occupies residues K395–I516.

It belongs to the alpha-IPM synthase/homocitrate synthase family. LeuA type 1 subfamily. As to quaternary structure, homodimer. It depends on Mn(2+) as a cofactor.

Its subcellular location is the cytoplasm. The catalysed reaction is 3-methyl-2-oxobutanoate + acetyl-CoA + H2O = (2S)-2-isopropylmalate + CoA + H(+). It participates in amino-acid biosynthesis; L-leucine biosynthesis; L-leucine from 3-methyl-2-oxobutanoate: step 1/4. Its function is as follows. Catalyzes the condensation of the acetyl group of acetyl-CoA with 3-methyl-2-oxobutanoate (2-ketoisovalerate) to form 3-carboxy-3-hydroxy-4-methylpentanoate (2-isopropylmalate). The polypeptide is 2-isopropylmalate synthase (Paraburkholderia phymatum (strain DSM 17167 / CIP 108236 / LMG 21445 / STM815) (Burkholderia phymatum)).